The sequence spans 249 residues: tRNA pseudouridine synthase A (249 aa).

The active-site Nucleophile is D53. Y111 lines the substrate pocket.

The protein belongs to the tRNA pseudouridine synthase TruA family. In terms of assembly, homodimer.

It carries out the reaction uridine(38/39/40) in tRNA = pseudouridine(38/39/40) in tRNA. Formation of pseudouridine at positions 38, 39 and 40 in the anticodon stem and loop of transfer RNAs. In Streptococcus pyogenes serotype M3 (strain ATCC BAA-595 / MGAS315), this protein is tRNA pseudouridine synthase A.